The sequence spans 427 residues: 3-phosphoshikimate 1-carboxyvinyltransferase (427 aa).

K20, S21, and R25 together coordinate 3-phosphoshikimate. Residue K20 coordinates phosphoenolpyruvate. Phosphoenolpyruvate is bound by residues G92 and R120. 3-phosphoshikimate-binding residues include S166, Q168, D312, and K339. Q168 contributes to the phosphoenolpyruvate binding site. The active-site Proton acceptor is D312. Phosphoenolpyruvate-binding residues include R343 and R385.

This sequence belongs to the EPSP synthase family. In terms of assembly, monomer.

The protein localises to the cytoplasm. It catalyses the reaction 3-phosphoshikimate + phosphoenolpyruvate = 5-O-(1-carboxyvinyl)-3-phosphoshikimate + phosphate. Its pathway is metabolic intermediate biosynthesis; chorismate biosynthesis; chorismate from D-erythrose 4-phosphate and phosphoenolpyruvate: step 6/7. Functionally, catalyzes the transfer of the enolpyruvyl moiety of phosphoenolpyruvate (PEP) to the 5-hydroxyl of shikimate-3-phosphate (S3P) to produce enolpyruvyl shikimate-3-phosphate and inorganic phosphate. The sequence is that of 3-phosphoshikimate 1-carboxyvinyltransferase from Streptococcus gordonii (strain Challis / ATCC 35105 / BCRC 15272 / CH1 / DL1 / V288).